A 544-amino-acid chain; its full sequence is Probable protein kinase UbiB (544 aa).

The region spanning 123 to 501 (DFDIKPLASA…KRQQAKGQFL (379 aa)) is the Protein kinase domain. ATP-binding positions include 129-137 (LASASIAQV) and lysine 152. Aspartate 287 (proton acceptor) is an active-site residue. Residues 515-537 (LLTSNITVLASISAATGAAFWLF) form a helical membrane-spanning segment.

The protein belongs to the ABC1 family. UbiB subfamily.

It localises to the cell inner membrane. Its pathway is cofactor biosynthesis; ubiquinone biosynthesis [regulation]. Functionally, is probably a protein kinase regulator of UbiI activity which is involved in aerobic coenzyme Q (ubiquinone) biosynthesis. The sequence is that of Probable protein kinase UbiB from Aliivibrio fischeri (strain ATCC 700601 / ES114) (Vibrio fischeri).